The following is a 1489-amino-acid chain: DEAD-box ATP-dependent DNA helicase Fancm (1489 aa).

Positions 65–237 (IVQSALFKNT…AVCRNLYISN (173 aa)) constitute a Helicase ATP-binding domain. 78–85 (LPTGLGKT) contacts ATP. Residues 185-188 (DEAH) carry the DEAH box motif. Residues 418 to 584 (KLRQVLVQHF…VVKLSLYEQN (167 aa)) enclose the Helicase C-terminal domain. Disordered stretches follow at residues 591 to 647 (KFQP…ESQQ), 980 to 1000 (VEESQRSTPISIADSSGESNH), 1145 to 1182 (TETIKNSENKNSHEDGSRTVSPDIFGSDSMSPLKPQGK), 1196 to 1222 (VLPCPPPNSVGLNSPENRKRTNPSIQE), 1255 to 1293 (NPTISVPKDEEDSPIARRPSKRKIVISSDEEEEQKPQIA), and 1452 to 1489 (ERRKQRRLGKVPSAPVNKRRRLQTISTSSDEDDVVLID). Over residues 594 to 610 (PKCEEKHMEPVAEEKPK) the composition is skewed to basic and acidic residues. Positions 611–625 (PKSAAKTKESRKRKQ) are enriched in basic residues. Residues 985-998 (RSTPISIADSSGES) are compositionally biased toward polar residues. Residues 1149 to 1161 (KNSENKNSHEDGS) show a composition bias toward basic and acidic residues. Positions 1480 to 1489 (SDEDDVVLID) are enriched in acidic residues.

It belongs to the DEAD box helicase family. DEAH subfamily. FANCM sub-subfamily.

Its subcellular location is the nucleus. It carries out the reaction ATP + H2O = ADP + phosphate + H(+). It catalyses the reaction Couples ATP hydrolysis with the unwinding of duplex DNA by translocating in the 3'-5' direction.. Its function is as follows. A ssDNA-dependent ATPase with 3' to 5' helicase activity. Involved in multiple DNA-damage responses, some that require ATPase and helicase activity and some that are independent of these. Involved in DNA interstrand cross-link repair, probably together with Fancl and other Fanconi anemia pathway homologs. Independent of Fancl involved in DNA double strand break repair, including contributing to the synthesis-dependent strand annealing (SDSA) pathway. Probably contributes to SDSA by unwinding short duplex regions in complex D-loop-like DNA structures. This chain is DEAD-box ATP-dependent DNA helicase Fancm, found in Drosophila melanogaster (Fruit fly).